The sequence spans 388 residues: ATP phosphoribosyltransferase regulatory subunit (388 aa).

This sequence belongs to the class-II aminoacyl-tRNA synthetase family. HisZ subfamily. As to quaternary structure, heteromultimer composed of HisG and HisZ subunits.

The protein resides in the cytoplasm. Its pathway is amino-acid biosynthesis; L-histidine biosynthesis; L-histidine from 5-phospho-alpha-D-ribose 1-diphosphate: step 1/9. In terms of biological role, required for the first step of histidine biosynthesis. May allow the feedback regulation of ATP phosphoribosyltransferase activity by histidine. This chain is ATP phosphoribosyltransferase regulatory subunit, found in Acinetobacter baylyi (strain ATCC 33305 / BD413 / ADP1).